The following is a 621-amino-acid chain: Protein CASP (621 aa).

Over 1 to 574 the chain is Cytoplasmic; it reads MEIVSRAWES…ILATPKSRTV (574 aa). 2 coiled-coil regions span residues 101–445 and 473–525; these read LLKG…VQDI and ILTS…FLQS. Residues 575 to 595 form a helical; Anchor for type IV membrane protein membrane-spanning segment; the sequence is FFSYLLILHALIMLVLYKFAF. At 596-621 the chain is on the lumenal side; it reads DQSVVRDAETECEYKFHQHMLDNHKQ.

This sequence belongs to the CASP family.

It is found in the golgi apparatus membrane. Functionally, may be involved in intra-Golgi retrograde transport. The polypeptide is Protein CASP (ceh-44) (Caenorhabditis elegans).